Here is a 126-residue protein sequence, read N- to C-terminus: MARVSGVDIPREKRVEIALTYVFGIGRTLSQQTLAATGVDPNTRVRDLSEEQLVAIREYVDNNIKTEGDLRREVQADIRRKVEIGTYQGLRHRRGLPVRGQRTSTNARTRKGPRRAIAGKKKPGKK.

The interval 91 to 126 is disordered; sequence RHRRGLPVRGQRTSTNARTRKGPRRAIAGKKKPGKK. Over residues 108 to 126 the composition is skewed to basic residues; sequence RTRKGPRRAIAGKKKPGKK.

The protein belongs to the universal ribosomal protein uS13 family. Part of the 30S ribosomal subunit. Forms a loose heterodimer with protein S19. Forms two bridges to the 50S subunit in the 70S ribosome.

Functionally, located at the top of the head of the 30S subunit, it contacts several helices of the 16S rRNA. In the 70S ribosome it contacts the 23S rRNA (bridge B1a) and protein L5 of the 50S subunit (bridge B1b), connecting the 2 subunits; these bridges are implicated in subunit movement. Contacts the tRNAs in the A and P-sites. The polypeptide is Small ribosomal subunit protein uS13 (Streptomyces coelicolor (strain ATCC BAA-471 / A3(2) / M145)).